The sequence spans 229 residues: Cytidylate kinase (229 aa).

12–20 (GPSGAGKGT) serves as a coordination point for ATP.

This sequence belongs to the cytidylate kinase family. Type 1 subfamily.

Its subcellular location is the cytoplasm. The catalysed reaction is CMP + ATP = CDP + ADP. It catalyses the reaction dCMP + ATP = dCDP + ADP. This is Cytidylate kinase from Serratia proteamaculans (strain 568).